The chain runs to 65 residues: Defensin Cg-Defm (65 aa).

The N-terminal stretch at 1–22 (MKVFVLLTLAVLLMVSADMAFA) is a signal peptide. The beta-D-GlcNAc-(1-&gt;4)-Mur2Ac(oyl-L-Ala-gamma-D-Glu-L-Lys-D-Ala-D-Ala)-di-trans,octa-cis-undecaprenyl diphosphate site is built by Phe-24, Gly-25, and Cys-26. Disulfide bonds link Cys-26/Cys-47, Cys-33/Cys-56, Cys-37/Cys-58, and Cys-42/Cys-61. The binds to membrane interface stretch occupies residues 27–30 (PGNQ). His-36 provides a ligand contact to beta-D-GlcNAc-(1-&gt;4)-Mur2Ac(oyl-L-Ala-gamma-D-Glu-L-Lys-D-Ala-D-Ala)-di-trans,octa-cis-undecaprenyl diphosphate. The segment at 48–54 (DAATLWL) is binds to membrane interface. Cys-56 lines the beta-D-GlcNAc-(1-&gt;4)-Mur2Ac(oyl-L-Ala-gamma-D-Glu-L-Lys-D-Ala-D-Ala)-di-trans,octa-cis-undecaprenyl diphosphate pocket.

Belongs to the invertebrate defensin family. In terms of tissue distribution, expressed in the mantle. Low or no expression in most of the organs analyzed, including hemocytes, heart, digestive gland, and gills.

It is found in the secreted. It localises to the target cell membrane. In terms of biological role, antibacterial peptide mostly active against Gram-positive bacteria (M.lysodeikticus, S.aureus, and the marine bacteria, B.stationis, and M.maritypicum). It acts by selectively inhibiting peptidoglycan biosynthesis through complex formation with the cell wall precursor lipid II (1:1 molar ratio) thus inhibiting cell wall synthesis. It does not disrupt cell membranes. Is noticeably more potent than Cg-Defh1. It shows no or limited activities against Gram-negative bacteria and filamentous fungi. The chain is Defensin Cg-Defm from Magallana gigas (Pacific oyster).